Here is a 270-residue protein sequence, read N- to C-terminus: UPF0354 protein BCAH820_4810 (270 aa).

The protein belongs to the UPF0354 family.

The chain is UPF0354 protein BCAH820_4810 from Bacillus cereus (strain AH820).